The primary structure comprises 896 residues: Zinc finger protein 574 (896 aa).

2 C2H2-type zinc fingers span residues 16–38 and 76–98; these read YVCS…QNSH and YQCL…QELH. At Ser113 the chain carries Phosphoserine. The segment at 126 to 148 adopts a C2H2-type 3 zinc-finger fold; that stretch reads YECVDCKALFASQELWLNHRQTH. Residue Ser164 is modified to Phosphoserine. A C2H2-type 4 zinc finger spans residues 214 to 236; sequence YKCSECSQLFQLPADFLEHQATH. The disordered stretch occupies residues 239–301; it reads APVPESQEPA…RARRNNSGEA (63 aa). Polar residues predominate over residues 247–257; it reads PALQQEVQASS. Positions 274–287 are enriched in basic and acidic residues; the sequence is HSYELRNGEAIGRD. Ser298 carries the phosphoserine modification. 4 consecutive C2H2-type zinc fingers follow at residues 309–331, 336–358, 364–386, and 392–413; these read LFCS…LRSH, FKCP…LGDH, FLCV…RRAH, and HSCP…RRTH. Residues 434 to 460 are disordered; that stretch reads FPEPAPAETGEPEAPEPPVSEETSAGP. The C2H2-type 9 zinc finger occupies 466-489; the sequence is YRCLLCSREFGKALQLTRHQRFVH. The segment at 495–517 adopts a C2H2-type 10; degenerate zinc-finger fold; the sequence is HKCSICGKMFKKKSHVRNHLRTH. C2H2-type zinc fingers lie at residues 523–545, 551–573, 579–601, and 607–630; these read FPCP…RLTH, YRCG…RLVH, YRCQ…RYHH, and YKCR…LVVH. The C2H2-type 15; degenerate zinc finger occupies 636 to 659; it reads HRCPSCGAAFPSSLRLREHRCAAA. The segment at 667 to 689 adopts a C2H2-type 16 zinc-finger fold; the sequence is FECGTCGKKVGSAARLQAHEAAH. Positions 687 to 733 are disordered; that stretch reads AAHAAAGPGEVLAKEPPAPRAPRATRAPVASPAALGSTATASPAAPA. The segment covering 707–732 has biased composition (low complexity); the sequence is APRATRAPVASPAALGSTATASPAAP. A Phosphoserine modification is found at Ser717. Thr724 is subject to Phosphothreonine. Ser728 is modified (phosphoserine). 4 C2H2-type zinc fingers span residues 738–760, 766–788, 794–816, and 822–844; these read LECS…RRIH, YPCP…RRLH, FACE…RRIH, and YSCP…RKTH. At Arg832 the chain carries Asymmetric dimethylarginine.

Belongs to the krueppel C2H2-type zinc-finger protein family.

The protein resides in the nucleus. Functionally, may be involved in transcriptional regulation. The chain is Zinc finger protein 574 (ZNF574) from Homo sapiens (Human).